A 473-amino-acid chain; its full sequence is Protein translocase subunit SecD (473 aa).

Helical transmembrane passes span 5–25, 316–336, 337–357, 364–384, 409–429, and 436–456; these read VLVK…LLYP, ASLY…KSGG, IISN…MAAF, PGIA…VLIL, WSAI…LFQF, and GFAV…VFVT.

The protein belongs to the SecD/SecF family. SecD subfamily. As to quaternary structure, forms a complex with SecF. Part of the essential Sec protein translocation apparatus which comprises SecA, SecYEG and auxiliary proteins SecDF. Other proteins may also be involved.

Its subcellular location is the cell inner membrane. Part of the Sec protein translocase complex. Interacts with the SecYEG preprotein conducting channel. SecDF uses the proton motive force (PMF) to complete protein translocation after the ATP-dependent function of SecA. The protein is Protein translocase subunit SecD of Elusimicrobium minutum (strain Pei191).